The primary structure comprises 56 residues: Large ribosomal subunit protein bL33 (56 aa).

Belongs to the bacterial ribosomal protein bL33 family.

This chain is Large ribosomal subunit protein bL33, found in Nocardioides sp. (strain ATCC BAA-499 / JS614).